Here is a 185-residue protein sequence, read N- to C-terminus: Ribosome-recycling factor (185 aa).

This sequence belongs to the RRF family.

The protein localises to the cytoplasm. Responsible for the release of ribosomes from messenger RNA at the termination of protein biosynthesis. May increase the efficiency of translation by recycling ribosomes from one round of translation to another. This is Ribosome-recycling factor from Pectobacterium carotovorum subsp. carotovorum (strain PC1).